We begin with the raw amino-acid sequence, 1368 residues long: MERDIYGDMADQHIPVGQGVQIRFIGDLKENGKPRGKRSKQDSYGVAVRVQGIDGQPFVVLNSGDKAKSSFGVQIKSQEPYLNASNTSPPNYQNYSSKPRGPSRSISSESELPENPYGSRGYRPSSSHYSSASDEEQKPRGNIRGSDGLSSLPRPLQASRREELRRSQSHSSLLEPDVEESYDYDHHYSERSSTLDTTYSQSSRDSAWSRSSQKKIDNGDYPSLGYRSATSQQSTSVSNKTKKNGLSTSSPSNQSNEDIDTKPLSSVDSLINKFDIKGQVRGRTARRSQALKDERKRSQSLDGRKNYHDTADSREIIVEKQNEVQTMREPVNASNRSFNRQTLERGDISKTRLTKEWLDQDREEPVILKQQRTVQSEFQLKSTPDLLRDQQPDGSDPTREMIFGILREGSLESENTLRKKTSILLEKLPSLQVQPGEDTISLGSQKKELERKVAELQRQLDDEMKQRMKLETSQGRPKAGMQRLEIELEESKEECSRLKELYEKKKNELSAMSQELMEVRMGKEQVETKLRTMEDKLMDSKEELSHLRAKGGTSPDKLALLKELEEVQDELDEVLQIRQKQEELLRQKDRELTALKGALKDEVANHDKDLDRVREQYQNDMQQLRKNMDNVSQDQLSLESERQKINQVVRNLQRELEESSDEISQWKEMFQKNKEELRSTKQELLQMKLEKEESEDELKETRDRFSLLQSELAQVKKGSVDPGEVASVRKELQRVQDQLKQLSVDKQKVEENLQQREREMSALKGTLKEEVSGRDRETVRLREQLQSEVMHVKKENEGLAKESRRIQDQLKQVLLEKQRHEETVHQRERELSVLKGALKDEVSGRDRETEKLRERLEQDALMTKRSYEELVKINKRLESEKTDLERVRQVIENNLQESREENDDLRRKILGLEAQLKETNTFCDDLQRAESRLKDKINKLEAERKRMEDSLGEVADQEQELAFVKRDLESKLDEAQRSLKRLSLEYEELQECYQEEMKQKDHLKKTKNELEEQKRLLDKSMDKLTRELDNMSNESRGSLQLLQTQLEEYREKSRKEIGEAQKQAKEKTAEAERHQFNSSRMQEEVQKLKLALQELQVEKETVELDKQMISQRLQSLEQDIESKKRVQDDRSRQVKVLEDKLKRMEAELDEEKNTVELLTDRVNRSRDQMEQQRAELNQERSRGQDLECDKISLERQNKELKNRLASMEGQQKPSVNVSHLEAKLQEIQERLQLEEREKATLLSTNRKLERKLKELNIQLEDERLQVNDQKDQLNLRVKALKRQVDEAEEEIERLEGLRKKAVREMEEQQEINEQLQTRVKVMEKESKRKPIRPAHDDDLSSDGEFGGPYDPSSITSLLTESNLQTSSC.

Positions 9–378 (MADQHIPVGQ…KQQRTVQSEF (370 aa)) are interaction with TJP3/ZO3 and myosin. A head region spans residues 9 to 435 (MADQHIPVGQ…EKLPSLQVQP (427 aa)). The ZIM signature appears at 41–55 (QDSYGVAVRVQGIDG). Disordered regions lie at residues 71–264 (FGVQ…TKPL), 278–312 (GQVRGRTARRSQALKDERKRSQSLDGRKNYHDTAD), 1053–1080 (SRKEIGEAQKQAKEKTAEAERHQFNSSR), 1163–1183 (NRSRDQMEQQRAELNQERSRG), and 1308–1368 (QQEI…TSSC). Positions 83–97 (NASNTSPPNYQNYSS) are enriched in polar residues. The segment at 101–294 (GPSRSISSES…ARRSQALKDE (194 aa)) is interaction with F-actin. Low complexity-rich tracts occupy residues 116–132 (PYGSRGYRPSSSHYSSA) and 200–211 (SQSSRDSAWSRS). The interval 150–295 (SSLPRPLQAS…RRSQALKDER (146 aa)) is interaction with TJP2/ZO2. The segment covering 228-256 (SATSQQSTSVSNKTKKNGLSTSSPSNQSN) has biased composition (polar residues). Over residues 290–312 (ALKDERKRSQSLDGRKNYHDTAD) the composition is skewed to basic and acidic residues. The interaction with myosin stretch occupies residues 377–1368 (EFQLKSTPDL…TESNLQTSSC (992 aa)). Residues 436 to 1330 (GEDTISLGSQ…VMEKESKRKP (895 aa)) adopt a coiled-coil conformation. Residues 1320-1338 (KVMEKESKRKPIRPAHDDD) show a composition bias toward basic and acidic residues. Residues 1331–1368 (IRPAHDDDLSSDGEFGGPYDPSSITSLLTESNLQTSSC) form a tail region. Polar residues predominate over residues 1352–1368 (SSITSLLTESNLQTSSC).

It belongs to the cingulin family. As to quaternary structure, parallel homodimer. Interacts with TJP1/ZO1 and TJP2/ZO2 in vivo, and TJP3/ZO3, myosin and OCLN in vitro, possibly directly. Acts as an F-actin bundling protein in vitro. In terms of tissue distribution, localized on the cytoplasmic face of tight junctions of polarized epithelia and some endothelia.

It localises to the cell junction. The protein localises to the tight junction. Functionally, probably plays a role in the formation and regulation of the tight junction (TJ) paracellular permeability barrier, possibly by linking ZO proteins to the actomyosin cytoskeleton. This Xenopus laevis (African clawed frog) protein is Cingulin.